The primary structure comprises 114 residues: UPF0145 protein PF1756 (114 aa).

The protein belongs to the UPF0145 family.

The polypeptide is UPF0145 protein PF1756 (Pyrococcus furiosus (strain ATCC 43587 / DSM 3638 / JCM 8422 / Vc1)).